A 203-amino-acid chain; its full sequence is dITP/XTP pyrophosphatase (203 aa).

Position 16–21 (16–21) interacts with substrate; sequence SHNRGK. Mg(2+) contacts are provided by Glu48 and Asp77. The active-site Proton acceptor is the Asp77. Residues Ser78, 161 to 164, Lys184, and 189 to 190 contribute to the substrate site; these read FGYD and HR.

Belongs to the HAM1 NTPase family. In terms of assembly, homodimer. It depends on Mg(2+) as a cofactor.

The enzyme catalyses XTP + H2O = XMP + diphosphate + H(+). The catalysed reaction is dITP + H2O = dIMP + diphosphate + H(+). It catalyses the reaction ITP + H2O = IMP + diphosphate + H(+). Pyrophosphatase that catalyzes the hydrolysis of nucleoside triphosphates to their monophosphate derivatives, with a high preference for the non-canonical purine nucleotides XTP (xanthosine triphosphate), dITP (deoxyinosine triphosphate) and ITP. Seems to function as a house-cleaning enzyme that removes non-canonical purine nucleotides from the nucleotide pool, thus preventing their incorporation into DNA/RNA and avoiding chromosomal lesions. This Rhodospirillum centenum (strain ATCC 51521 / SW) protein is dITP/XTP pyrophosphatase.